A 69-amino-acid chain; its full sequence is uncharacterized protein (69 aa).

The helical transmembrane segment at 13–35 (IRSINPTLLNFINYFLLIVPQFI) threads the bilayer.

It localises to the membrane. This is an uncharacterized protein from Saccharomyces cerevisiae (strain ATCC 204508 / S288c) (Baker's yeast).